The chain runs to 128 residues: Fluoride-specific ion channel FluC (128 aa).

4 consecutive transmembrane segments (helical) span residues 7-27 (AVLLVGAGGFAGASARYLIAV), 34-54 (TGFPMATMLVNVLGCFLIGMI), 70-90 (LLLATGFCGGFTTFSSYMYEI), and 104-124 (LYLIGSLVGGMVFLYLGMALA). Gly78 and Thr81 together coordinate Na(+).

It belongs to the fluoride channel Fluc/FEX (TC 1.A.43) family.

The protein resides in the cell inner membrane. The enzyme catalyses fluoride(in) = fluoride(out). Its activity is regulated as follows. Na(+) is not transported, but it plays an essential structural role and its presence is essential for fluoride channel function. Fluoride-specific ion channel. Important for reducing fluoride concentration in the cell, thus reducing its toxicity. In Prosthecochloris aestuarii (strain DSM 271 / SK 413), this protein is Fluoride-specific ion channel FluC.